Consider the following 466-residue polypeptide: UDP-N-acetylmuramate--L-alanine ligase (466 aa).

114–120 serves as a coordination point for ATP; the sequence is GTHGKTT.

It belongs to the MurCDEF family.

The protein resides in the cytoplasm. The catalysed reaction is UDP-N-acetyl-alpha-D-muramate + L-alanine + ATP = UDP-N-acetyl-alpha-D-muramoyl-L-alanine + ADP + phosphate + H(+). Its pathway is cell wall biogenesis; peptidoglycan biosynthesis. Cell wall formation. The sequence is that of UDP-N-acetylmuramate--L-alanine ligase from Chlorobium phaeobacteroides (strain DSM 266 / SMG 266 / 2430).